We begin with the raw amino-acid sequence, 281 residues long: Glutamate racemase (281 aa).

Substrate-binding positions include 13–14 (DS) and 45–46 (YG). Catalysis depends on Cys76, which acts as the Proton donor/acceptor. 77–78 (NT) is a binding site for substrate. The Proton donor/acceptor role is filled by Cys185. A substrate-binding site is contributed by 186–187 (TH).

It belongs to the aspartate/glutamate racemases family.

The catalysed reaction is L-glutamate = D-glutamate. The protein operates within cell wall biogenesis; peptidoglycan biosynthesis. Its function is as follows. Provides the (R)-glutamate required for cell wall biosynthesis. In Rippkaea orientalis (strain PCC 8801 / RF-1) (Cyanothece sp. (strain PCC 8801)), this protein is Glutamate racemase.